The sequence spans 188 residues: Peptidyl-tRNA hydrolase (188 aa).

Tyr17 is a binding site for tRNA. His22 (proton acceptor) is an active-site residue. TRNA is bound by residues Tyr65, Asn67, and Asn113.

This sequence belongs to the PTH family. As to quaternary structure, monomer.

The protein localises to the cytoplasm. It carries out the reaction an N-acyl-L-alpha-aminoacyl-tRNA + H2O = an N-acyl-L-amino acid + a tRNA + H(+). Hydrolyzes ribosome-free peptidyl-tRNAs (with 1 or more amino acids incorporated), which drop off the ribosome during protein synthesis, or as a result of ribosome stalling. Functionally, catalyzes the release of premature peptidyl moieties from peptidyl-tRNA molecules trapped in stalled 50S ribosomal subunits, and thus maintains levels of free tRNAs and 50S ribosomes. In Mycoplasma pneumoniae (strain ATCC 29342 / M129 / Subtype 1) (Mycoplasmoides pneumoniae), this protein is Peptidyl-tRNA hydrolase.